We begin with the raw amino-acid sequence, 506 residues long: Maturase K (506 aa).

It belongs to the intron maturase 2 family. MatK subfamily.

It is found in the plastid. The protein localises to the chloroplast. In terms of biological role, usually encoded in the trnK tRNA gene intron. Probably assists in splicing its own and other chloroplast group II introns. This chain is Maturase K, found in Andromeda polifolia (Bog rosemary).